Here is a 171-residue protein sequence, read N- to C-terminus: Inosine/xanthosine triphosphatase (171 aa).

8 to 13 lines the substrate pocket; the sequence is TTNPAK. Residues Glu-38 and Gln-68 each coordinate Mg(2+).

The protein belongs to the YjjX NTPase family. As to quaternary structure, homodimer. Mg(2+) is required as a cofactor. Requires Mn(2+) as cofactor.

It catalyses the reaction XTP + H2O = XDP + phosphate + H(+). It carries out the reaction ITP + H2O = IDP + phosphate + H(+). Phosphatase that hydrolyzes non-canonical purine nucleotides such as XTP and ITP to their respective diphosphate derivatives. Probably excludes non-canonical purines from DNA/RNA precursor pool, thus preventing their incorporation into DNA/RNA and avoiding chromosomal lesions. The protein is Inosine/xanthosine triphosphatase of Citrobacter koseri (strain ATCC BAA-895 / CDC 4225-83 / SGSC4696).